We begin with the raw amino-acid sequence, 884 residues long: Translation initiation factor IF-2 (884 aa).

The interval 93-288 (VNTPEAEQAK…KGKRKPSTLQ (196 aa)) is disordered. Over residues 99 to 209 (EQAKAEEQAQ…KMAAENEGKW (111 aa)) the composition is skewed to basic and acidic residues. The span at 216 to 229 (QTESADYHVTTSQH) shows a compositional bias: polar residues. Residues 231–246 (RAAEDENDAKVEGDRR) are compositionally biased toward basic and acidic residues. Residues 247–261 (SRTRGGKATKQKKGN) are compositionally biased toward basic residues. The span at 262 to 275 (KLSESKADREEARA) shows a compositional bias: basic and acidic residues. In terms of domain architecture, tr-type G spans 383–552 (HRAPVVTIMG…LLQAEVLELK (170 aa)). The G1 stretch occupies residues 392–399 (GHVDHGKT). A GTP-binding site is contributed by 392–399 (GHVDHGKT). The interval 417–421 (GITQH) is G2. The segment at 438–441 (DTPG) is G3. GTP is bound by residues 438-442 (DTPGH) and 492-495 (NKID). The interval 492–495 (NKID) is G4. The tract at residues 528–530 (SAK) is G5.

The protein belongs to the TRAFAC class translation factor GTPase superfamily. Classic translation factor GTPase family. IF-2 subfamily.

It localises to the cytoplasm. In terms of biological role, one of the essential components for the initiation of protein synthesis. Protects formylmethionyl-tRNA from spontaneous hydrolysis and promotes its binding to the 30S ribosomal subunits. Also involved in the hydrolysis of GTP during the formation of the 70S ribosomal complex. This chain is Translation initiation factor IF-2, found in Yersinia pestis bv. Antiqua (strain Angola).